We begin with the raw amino-acid sequence, 603 residues long: Serine/threonine-protein kinase PLK1 (603 aa).

Residues 1–15 (MNAAAKAGKLARAPA) are compositionally biased toward low complexity. The segment at 1–32 (MNAAAKAGKLARAPADLGKGGVPGDAAPGAPG) is disordered. A Glycyl lysine isopeptide (Lys-Gly) (interchain with G-Cter in ubiquitin) cross-link involves residue lysine 19. The region spanning 53–305 (YVRGRFLGKG…IHELLNDEFF (253 aa)) is the Protein kinase domain. ATP contacts are provided by residues 59-67 (LGKGGFAKC) and lysine 82. At serine 103 the chain carries Phosphoserine. Glutamate 131 contacts ATP. Serine 137 is subject to Phosphoserine. Residue aspartate 176 is the Proton acceptor of the active site. ATP-binding positions include 178-181 (KLGN) and aspartate 194. Residues 194 to 221 (DFGLATKVEYEGERKKTLCGTPNYIAPE) form an activation loop region. The residue at position 210 (threonine 210) is a Phosphothreonine; by AURKA. Position 214 is a phosphothreonine (threonine 214). Phosphoserine; by autocatalysis is present on residues serine 269 and serine 335. The D-box that targets the protein for proteasomal degradation in anaphase signature appears at 337–340 (RKPL). Lysine 338 participates in a covalent cross-link: Glycyl lysine isopeptide (Lys-Gly) (interchain with G-Cter in SUMO2). Residues 338 to 361 (KPLTVLNKGVENPLPDRPREKEEP) are disordered. The span at 351-361 (LPDRPREKEEP) shows a compositional bias: basic and acidic residues. Residues serine 375 and serine 450 each carry the phosphoserine modification. A POLO box 1 domain is found at 410–488 (WVSKWVDYSD…LNYFRNYMSE (79 aa)). Residue lysine 492 forms a Glycyl lysine isopeptide (Lys-Gly) (interchain with G-Cter in ubiquitin) linkage. The segment at 493–507 (AGANITPREGDELAR) is linker. At threonine 498 the chain carries Phosphothreonine. The POLO box 2 domain maps to 510-592 (YLRTWFRTRS…ARTMVDKLLS (83 aa)). Residues 538-540 (HTK) form an important for interaction with phosphorylated proteins region.

Belongs to the protein kinase superfamily. Ser/Thr protein kinase family. CDC5/Polo subfamily. In terms of assembly, interacts with CEP170 and EVI5. Interacts and phosphorylates ERCC6L. Interacts with FAM29A. Interacts with SLX4/BTBD12 and TTDN1. Interacts with BUB1B. Interacts (via POLO-box domain) with the phosphorylated form of BUB1, CENPU and CDC25C. Interacts with isoform 3 of SGO1. Interacts with BORA, KIF2A and AURKA. Interacts with TOPORS and CYLD. Interacts with ECT2; the interaction is stimulated upon phosphorylation of ECT2 on 'Thr-444'. Interacts with PRC1. Interacts with KIF20A/MKLP2 (when phosphorylated), leading to the recruitment at the central spindle. Interacts (via POLO box domains) with PPP1R12A/MYPT1 (when previously phosphorylated by CDK1). Part of an astrin (SPAG5)-kinastrin (SKAP) complex containing KNSTRN, SPAG5, PLK1, DYNLL1 and SGO2. Interacts with BIRC6/bruce. Interacts with CDK1-phosphorylated FRY; this interaction occurs in mitotic cells, but not in interphase cells. FRY interaction facilitates AURKA-mediated PLK1 phosphorylation. Interacts with CDK1-phosphorylated DCTN6 during mitotic prometaphase; the interaction facilitates recruitment to kinetochores. Interacts with CEP68; the interaction phosphorylates CEP68. Interacts (via POLO-box domain) with DCTN1. Interacts with CEP20 in later G1, S, G2 and M phases of the cell cycle; this interaction recruits PLK1 to centrosomes, a step required for S phase progression. Interacts with HSF1; this interaction increases upon heat shock but does not modulate neither HSF1 homotrimerization nor DNA-binding activities. Interacts with HNRNPU; this interaction induces phosphorylation of HNRNPU in mitosis. Interacts (via its N-terminus) with RIOK2. Interacts with KLHL22. Interacts (via POLO box domains) with NEDD9/HEF1 (via C-terminus). Interacts (via RVxF motif) with FIRRM; regulates PLK1 kinase activity. Interacts with SKA3; the interaction promotes the stability of PLK1. Interacts with the MTMR3:MTMR4 heterooligomer; brings CEP55 and PLK1 together during early mitosis, regulating the phosphorylation of CEP55 by PLK1 and its recruitment to the midbody where it can mediate cell abscission. Catalytic activity is enhanced by phosphorylation of Thr-210. Phosphorylation at Thr-210 is first detected on centrosomes in the G2 phase of the cell cycle, peaks in prometaphase and gradually disappears from centrosomes during anaphase. Dephosphorylation at Thr-210 at centrosomes is probably mediated by protein phosphatase 1C (PP1C), via interaction with PPP1R12A/MYPT1. Autophosphorylation and phosphorylation of Ser-137 may not be significant for the activation of PLK1 during mitosis, but may enhance catalytic activity during recovery after DNA damage checkpoint. Phosphorylated in vitro by STK10. In terms of processing, ubiquitinated by the anaphase promoting complex/cyclosome (APC/C) in anaphase and following DNA damage, leading to its degradation by the proteasome. Ubiquitination is mediated via its interaction with FZR1/CDH1. Ubiquitination and subsequent degradation prevents entry into mitosis and is essential to maintain an efficient G2 DNA damage checkpoint. Monoubiquitination at Lys-492 by the BCR(KLHL22) ubiquitin ligase complex does not lead to degradation: it promotes PLK1 dissociation from phosphoreceptor proteins and subsequent removal from kinetochores, allowing silencing of the spindle assembly checkpoint (SAC) and chromosome segregation.

Its subcellular location is the nucleus. It localises to the chromosome. It is found in the centromere. The protein resides in the kinetochore. The protein localises to the cytoplasm. Its subcellular location is the cytoskeleton. It localises to the microtubule organizing center. It is found in the centrosome. The protein resides in the spindle. The protein localises to the midbody. It carries out the reaction L-seryl-[protein] + ATP = O-phospho-L-seryl-[protein] + ADP + H(+). The enzyme catalyses L-threonyl-[protein] + ATP = O-phospho-L-threonyl-[protein] + ADP + H(+). With respect to regulation, activated by phosphorylation of Thr-210 by AURKA; phosphorylation by AURKA is enhanced by BORA. Once activated, activity is stimulated by binding target proteins. Binding of target proteins has no effect on the non-activated kinase. Several inhibitors targeting PLKs are currently in development and are under investigation in a growing number of clinical trials, such as BI 2536, an ATP-competitive PLK1 inhibitor or BI 6727, a dihydropteridinone that specifically inhibits the catalytic activity of PLK1. Serine/threonine-protein kinase that performs several important functions throughout M phase of the cell cycle, including the regulation of centrosome maturation and spindle assembly, the removal of cohesins from chromosome arms, the inactivation of anaphase-promoting complex/cyclosome (APC/C) inhibitors, and the regulation of mitotic exit and cytokinesis. Polo-like kinase proteins act by binding and phosphorylating proteins that are already phosphorylated on a specific motif recognized by the POLO box domains. Phosphorylates BORA, BUB1B/BUBR1, CCNB1, CDC25C, CEP55, ECT2, ERCC6L, FBXO5/EMI1, FOXM1, KIF20A/MKLP2, CENPU, NEDD1, NINL, NPM1, NUDC, PKMYT1/MYT1, KIZ, PPP1R12A/MYPT1, PRC1, RACGAP1/CYK4, RHNO1, SGO1, STAG2/SA2, TEX14, TOPORS, p73/TP73, TPT1, WEE1 and HNRNPU. Plays a key role in centrosome functions and the assembly of bipolar spindles by phosphorylating KIZ, NEDD1 and NINL. NEDD1 phosphorylation promotes subsequent targeting of the gamma-tubulin ring complex (gTuRC) to the centrosome, an important step for spindle formation. Phosphorylation of NINL component of the centrosome leads to NINL dissociation from other centrosomal proteins. Involved in mitosis exit and cytokinesis by phosphorylating CEP55, ECT2, KIF20A/MKLP2, CENPU, PRC1 and RACGAP1. Recruited at the central spindle by phosphorylating and docking PRC1 and KIF20A/MKLP2; creates its own docking sites on PRC1 and KIF20A/MKLP2 by mediating phosphorylation of sites subsequently recognized by the POLO box domains. Phosphorylates RACGAP1, thereby creating a docking site for the Rho GTP exchange factor ECT2 that is essential for the cleavage furrow formation. Promotes the central spindle recruitment of ECT2. Plays a central role in G2/M transition of mitotic cell cycle by phosphorylating CCNB1, CDC25C, FOXM1, CENPU, PKMYT1/MYT1, PPP1R12A/MYPT1 and WEE1. Part of a regulatory circuit that promotes the activation of CDK1 by phosphorylating the positive regulator CDC25C and inhibiting the negative regulators WEE1 and PKMYT1/MYT1. Also acts by mediating phosphorylation of cyclin-B1 (CCNB1) on centrosomes in prophase. Phosphorylates FOXM1, a key mitotic transcription regulator, leading to enhance FOXM1 transcriptional activity. Involved in kinetochore functions and sister chromatid cohesion by phosphorylating BUB1B/BUBR1, FBXO5/EMI1 and STAG2/SA2. PLK1 is high on non-attached kinetochores suggesting a role of PLK1 in kinetochore attachment or in spindle assembly checkpoint (SAC) regulation. Required for kinetochore localization of BUB1B. Regulates the dissociation of cohesin from chromosomes by phosphorylating cohesin subunits such as STAG2/SA2. Phosphorylates SGO1: required for spindle pole localization of isoform 3 of SGO1 and plays a role in regulating its centriole cohesion function. Mediates phosphorylation of FBXO5/EMI1, a negative regulator of the APC/C complex during prophase, leading to FBXO5/EMI1 ubiquitination and degradation by the proteasome. Acts as a negative regulator of p53 family members: phosphorylates TOPORS, leading to inhibit the sumoylation of p53/TP53 and simultaneously enhance the ubiquitination and subsequent degradation of p53/TP53. Phosphorylates the transactivation domain of the transcription factor p73/TP73, leading to inhibit p73/TP73-mediated transcriptional activation and pro-apoptotic functions. Phosphorylates BORA, and thereby promotes the degradation of BORA. Contributes to the regulation of AURKA function. Also required for recovery after DNA damage checkpoint and entry into mitosis. Phosphorylates MISP, leading to stabilization of cortical and astral microtubule attachments required for proper spindle positioning. Together with MEIKIN, acts as a regulator of kinetochore function during meiosis I: required both for mono-orientation of kinetochores on sister chromosomes and protection of centromeric cohesin from separase-mediated cleavage. Phosphorylates CEP68 and is required for its degradation. Regulates nuclear envelope breakdown during prophase by phosphorylating DCTN1 resulting in its localization in the nuclear envelope. Phosphorylates the heat shock transcription factor HSF1, promoting HSF1 nuclear translocation upon heat shock. Phosphorylates HSF1 also in the early mitotic period; this phosphorylation regulates HSF1 localization to the spindle pole, the recruitment of the SCF(BTRC) ubiquitin ligase complex induicing HSF1 degradation, and hence mitotic progression. Regulates mitotic progression by phosphorylating RIOK2. Through the phosphorylation of DZIP1 regulates the localization during mitosis of the BBSome, a ciliary protein complex involved in cilium biogenesis. Regulates DNA repair during mitosis by mediating phosphorylation of POLQ and RHNO1, thereby promoting POLQ recruitment to DNA damage sites. Phosphorylates ATXN10 which may play a role in the regulation of cytokinesis and may stimulate the proteasome-mediated degradation of ATXN10. This Rattus norvegicus (Rat) protein is Serine/threonine-protein kinase PLK1 (Plk1).